Here is a 257-residue protein sequence, read N- to C-terminus: Phosphate import ATP-binding protein PstB (257 aa).

The ABC transporter domain maps to 11–252 (IQVRDLNFYY…PAKKQTEDYI (242 aa)). Residue 43–50 (GPSGCGKS) participates in ATP binding.

Belongs to the ABC transporter superfamily. Phosphate importer (TC 3.A.1.7) family. As to quaternary structure, the complex is composed of two ATP-binding proteins (PstB), two transmembrane proteins (PstC and PstA) and a solute-binding protein (PstS).

The protein resides in the cell inner membrane. The enzyme catalyses phosphate(out) + ATP + H2O = ADP + 2 phosphate(in) + H(+). Part of the ABC transporter complex PstSACB involved in phosphate import. Responsible for energy coupling to the transport system. The chain is Phosphate import ATP-binding protein PstB from Enterobacter cloacae.